The sequence spans 142 residues: Large ribosomal subunit protein bL17 (142 aa).

Belongs to the bacterial ribosomal protein bL17 family. As to quaternary structure, part of the 50S ribosomal subunit. Contacts protein L32.

The protein is Large ribosomal subunit protein bL17 of Brucella canis (strain ATCC 23365 / NCTC 10854 / RM-666).